We begin with the raw amino-acid sequence, 517 residues long: GMP synthase [glutamine-hydrolyzing] (517 aa).

The 194-residue stretch at 9-202 folds into the Glutamine amidotransferase type-1 domain; the sequence is KIIVLDYGSQ…AFNVCKAKGD (194 aa). C86 acts as the Nucleophile in catalysis. Active-site residues include H176 and E178. Residues 203–392 enclose the GMPS ATP-PPase domain; it reads WSMDSFIDME…LGMPDEIVWR (190 aa). 230–236 contributes to the ATP binding site; sequence SGGVDSS.

In terms of assembly, homodimer.

It carries out the reaction XMP + L-glutamine + ATP + H2O = GMP + L-glutamate + AMP + diphosphate + 2 H(+). It participates in purine metabolism; GMP biosynthesis; GMP from XMP (L-Gln route): step 1/1. Catalyzes the synthesis of GMP from XMP. The chain is GMP synthase [glutamine-hydrolyzing] from Streptococcus mutans serotype c (strain ATCC 700610 / UA159).